Consider the following 584-residue polypeptide: Aspartate--tRNA(Asp/Asn) ligase (584 aa).

Glu-173 contacts L-aspartate. Residues 197-200 (QLFK) form an aspartate region. An L-aspartate-binding site is contributed by Arg-219. ATP contacts are provided by residues 219-221 (RDE) and Gln-228. Residue His-446 coordinates L-aspartate. Glu-476 serves as a coordination point for ATP. Arg-483 is a binding site for L-aspartate. Position 528 to 531 (528 to 531 (GLDR)) interacts with ATP.

This sequence belongs to the class-II aminoacyl-tRNA synthetase family. Type 1 subfamily. As to quaternary structure, homodimer.

Its subcellular location is the cytoplasm. The enzyme catalyses tRNA(Asx) + L-aspartate + ATP = L-aspartyl-tRNA(Asx) + AMP + diphosphate. Aspartyl-tRNA synthetase with relaxed tRNA specificity since it is able to aspartylate not only its cognate tRNA(Asp) but also tRNA(Asn). Reaction proceeds in two steps: L-aspartate is first activated by ATP to form Asp-AMP and then transferred to the acceptor end of tRNA(Asp/Asn). This chain is Aspartate--tRNA(Asp/Asn) ligase, found in Sulfurovum sp. (strain NBC37-1).